The chain runs to 1342 residues: DNA-directed RNA polymerase subunit beta (1342 aa).

This sequence belongs to the RNA polymerase beta chain family. As to quaternary structure, the RNAP catalytic core consists of 2 alpha, 1 beta, 1 beta' and 1 omega subunit. When a sigma factor is associated with the core the holoenzyme is formed, which can initiate transcription.

The catalysed reaction is RNA(n) + a ribonucleoside 5'-triphosphate = RNA(n+1) + diphosphate. DNA-dependent RNA polymerase catalyzes the transcription of DNA into RNA using the four ribonucleoside triphosphates as substrates. This chain is DNA-directed RNA polymerase subunit beta, found in Pectobacterium atrosepticum (strain SCRI 1043 / ATCC BAA-672) (Erwinia carotovora subsp. atroseptica).